Here is a 911-residue protein sequence, read N- to C-terminus: MVKAPQSEERLAGGGKGNNSVLACGAQASWSIFGADAAEVPGTRSHSRQEAAMPHIPEDEEPPGEPQAAQSPAGQDPATTGISCSPPTIILTGDASSPEGETDKNPVNRAHSPHRRLSHRHLKVSTASLTSVDPAGHVIDLVNDQLPDISISEEDKKKNLALLEEAKLVSERFLTRRGRKSRSSPGESSPAVSPNLSPGASPASSQSNSLTVPTPPGLDVCSGPPSPLPGAPPQKGDEAEVPSPHLGESNVLKGLADRKQNDQRTLSQGRLTARSPTVEKSKEITIEQKENFDPLQRPEAIPKGPASGPGSGGKMALNSPQPGPVESELGKPLAKTAKEGNPLPRGPTQGSGGVAPQASQGKSTVGEPAGSKVGSKAELWPPTSRPPLLRGVSWDSGPEEPGPRLQKVLAKLPLAEEEKRFTGKAGSKLAKAPGLKDFQIQVQPVRMQKLTKLREEHILLRNQNLVGLKLPELSEAAEQEKGHPSELSSAIEEEESKGGLDVMPNISDVLLRKLRVHKSLPGSAPPLTEKEVENVFVQLSLAFRNDSYTLESRINQAERERNLTEENTEKELENFKASITSSASLWHHCEHRETYQKLLEDIAVLHRLAARLSSRAEMVGAVRQEKRMSKATEVMMQYVENLKRTYEKDHAELMEFKKLANQNSSRSCGPSEDGVPRTARSMSLSLGKNMPRRRVSVAVVPKFNILNLPGQSPSSSPIPSLPALSESSNGKGNPPVSSALPALLENGKTNGDPDCEASASVPTPSCLEGISQEAKARMEEEAYNKGYQEGLKKTKELQGLREEEEEQKSESPEEPEEVAETEEEEKEQRSSKLEELVHFLQVMYPKLCQHWQVIWMMAAAMLVLTVVLGLYGSHNSCVEQADGSLGKSTCSAAQRDSWWSSGLQHEQPTEQ.

Residues 1 to 11 show a composition bias toward basic and acidic residues; the sequence is MVKAPQSEERL. Disordered stretches follow at residues 1–21, 39–122, 174–405, and 478–498; these read MVKA…NNSV, EVPG…HRHL, LTRR…GPRL, and EQEK…ESKG. A compositionally biased stretch (polar residues) spans 68–86; sequence AAQSPAGQDPATTGISCSP. A compositionally biased stretch (basic residues) spans 111-122; it reads HSPHRRLSHRHL. The residue at position 118 (serine 118) is a Phosphoserine. Residues 152-184 form an interaction with PRKG1 region; that stretch reads SEEDKKKNLALLEEAKLVSERFLTRRGRKSRSS. Residues 183 to 212 show a composition bias toward polar residues; sequence SSPGESSPAVSPNLSPGASPASSQSNSLTV. A compositionally biased stretch (basic and acidic residues) spans 277-292; that stretch reads TVEKSKEITIEQKENF. At serine 393 the chain carries Phosphoserine. The segment at 534 to 580 is interaction with ITPR1; it reads NVFVQLSLAFRNDSYTLESRINQAERERNLTEENTEKELENFKASIT. Positions 547 to 645 form a coiled coil; the sequence is SYTLESRINQ…MQYVENLKRT (99 aa). Serine 683 and serine 696 each carry phosphoserine. Disordered stretches follow at residues 706–766 and 787–829; these read LNLP…TPSC and YQEG…KEQR. A compositionally biased stretch (low complexity) spans 708–728; sequence LPGQSPSSSPIPSLPALSESS. The segment covering 790–801 has biased composition (basic and acidic residues); it reads GLKKTKELQGLR. The segment covering 802 to 825 has biased composition (acidic residues); the sequence is EEEEEQKSESPEEPEEVAETEEEE. The helical transmembrane segment at 853–873 threads the bilayer; it reads VIWMMAAAMLVLTVVLGLYGS.

As to quaternary structure, interacts with PRKG1/cGKI-beta and ITPR1/IP3R type I. Part of cGMP kinase signaling complex at least composed of ACTA2/alpha-actin, CNN1/calponin H1, PLN/phospholamban, PRKG1 and ITPR1. Interacts with HCN4; regulates HCN4 channel activity. Phosphorylated by PRKG1/cGKI-beta. Phosphorylation at Ser-696 is necessary for PRKG1-induced calcium release in the cytosol. Highly expressed in trachea, aorta and uterus.

The protein localises to the sarcoplasmic reticulum. Its subcellular location is the cytoplasm. It is found in the perinuclear region. It localises to the membrane. Its function is as follows. Plays a role as NO/PRKG1-dependent regulator of IP3-induced calcium release; its phosphorylation by PRKG1 inhibits bradykinin and IP3-induced calcium release from intracellular stores. Recruits PRKG1 to the endoplasmic reticulum and may mediate the assembly of PRKG1 and ITPR1 in a macrocomplex. Involved in PRKG1 signaling cascade leading to inhibition of platelet activation and aggregation. Also mediates NO-dependent inhibition of calcium signaling in gastrointestinal smooth muscle contributing to NO-dependent relaxation. Plays a role in the regulation of cellular excitability by regulating the hyperpolarization-activated cyclic nucleotide-gated HCN4 channel activity. In Bos taurus (Bovine), this protein is Inositol 1,4,5-triphosphate receptor associated 1 (IRAG1).